The sequence spans 690 residues: Elongation factor G (690 aa).

Positions 8 to 283 (EDYRNFGIMA…AVVAYLPSPL (276 aa)) constitute a tr-type G domain. GTP-binding positions include 17-24 (AHIDAGKT), 81-85 (DTPGH), and 135-138 (NKMD).

This sequence belongs to the TRAFAC class translation factor GTPase superfamily. Classic translation factor GTPase family. EF-G/EF-2 subfamily.

Its subcellular location is the cytoplasm. Functionally, catalyzes the GTP-dependent ribosomal translocation step during translation elongation. During this step, the ribosome changes from the pre-translocational (PRE) to the post-translocational (POST) state as the newly formed A-site-bound peptidyl-tRNA and P-site-bound deacylated tRNA move to the P and E sites, respectively. Catalyzes the coordinated movement of the two tRNA molecules, the mRNA and conformational changes in the ribosome. This Nitrobacter winogradskyi (strain ATCC 25391 / DSM 10237 / CIP 104748 / NCIMB 11846 / Nb-255) protein is Elongation factor G.